The following is a 614-amino-acid chain: Threonine--tRNA ligase (614 aa).

Positions 1–141 (MRLLLIHSDY…LSKTIVPGEE (141 aa)) are editing domain. The tract at residues 198 to 490 (AHVDLMRSKE…ISTQKVPALP (293 aa)) is catalytic. The Zn(2+) site is built by cysteine 290, histidine 342, and histidine 463.

This sequence belongs to the class-II aminoacyl-tRNA synthetase family. Homodimer. It depends on Zn(2+) as a cofactor.

The protein localises to the cytoplasm. The catalysed reaction is tRNA(Thr) + L-threonine + ATP = L-threonyl-tRNA(Thr) + AMP + diphosphate + H(+). Catalyzes the attachment of threonine to tRNA(Thr) in a two-step reaction: L-threonine is first activated by ATP to form Thr-AMP and then transferred to the acceptor end of tRNA(Thr). Also edits incorrectly charged L-seryl-tRNA(Thr). The chain is Threonine--tRNA ligase from Methanoregula boonei (strain DSM 21154 / JCM 14090 / 6A8).